Consider the following 255-residue polypeptide: Cytosolic Fe-S cluster assembly factor Nubp2 homolog (255 aa).

Gly14 to Ser21 provides a ligand contact to ATP. Residues Cys185 and Cys188 each contribute to the [4Fe-4S] cluster site.

It belongs to the Mrp/NBP35 ATP-binding proteins family. NUBP2/CFD1 subfamily. In terms of assembly, heterotetramer of 2 Nubp1 and 2 Nubp2 chains. The cofactor is [4Fe-4S] cluster.

It is found in the cytoplasm. In terms of biological role, component of the cytosolic iron-sulfur (Fe/S) protein assembly (CIA) machinery. Required for maturation of extramitochondrial Fe-S proteins. The Nubp1-Nubp2 heterotetramer forms a Fe-S scaffold complex, mediating the de novo assembly of an Fe-S cluster and its transfer to target apoproteins. The chain is Cytosolic Fe-S cluster assembly factor Nubp2 homolog from Drosophila persimilis (Fruit fly).